A 2919-amino-acid polypeptide reads, in one-letter code: RNA-directed RNA polymerase L (2919 aa).

An endonuclease region spans residues 86-675 (SLMKQLDPND…DNDINLDSAT (590 aa)). Mn(2+)-binding residues include His535, Asp567, and Glu585. The active-site For endonuclease activity is the Lys604. A RdRp catalytic domain is found at 1472-1671 (ARKTLKNEYM…SWFRKKEKLG (200 aa)). Asp1636 is a binding site for Mg(2+). The interval 2494–2632 (RVGKLGILGS…PLYWNPSLST (139 aa)) is cap-binding.

Belongs to the Bunyavirales RNA polymerase family. Homomultimer. Interacts with glycoprotein N; this interaction allows efficient polymerase packaging into virus particles. Interacts with nucleoprotein N. Mn(2+) is required as a cofactor. Requires Mg(2+) as cofactor.

Its subcellular location is the host Golgi apparatus. It localises to the host endoplasmic reticulum. The protein localises to the host endoplasmic reticulum-Golgi intermediate compartment. It is found in the virion. The enzyme catalyses RNA(n) + a ribonucleoside 5'-triphosphate = RNA(n+1) + diphosphate. RNA-dependent RNA polymerase, which is responsible for the replication and transcription of the viral RNA genome using antigenomic RNA as an intermediate. During transcription, synthesizes subgenomic RNAs and assures their capping by a cap-snatching mechanism, which involves the endonuclease activity cleaving the host capped pre-mRNAs. These short capped RNAs are then used as primers for viral transcription. The 3'-end of subgenomic mRNAs molecules are not polyadenylated. During replication, the polymerase binds the 5' and 3' vRNA extremities at distinct sites. In turn, significant conformational changes occur in the polymerase and in vRNA to initiate active RNA synthesis. As a consequence of the use of the same enzyme for both transcription and replication, these mechanisms need to be well coordinated. The polypeptide is RNA-directed RNA polymerase L (Avena sativa (Oat)).